Consider the following 37-residue polypeptide: Esculentin-2Rb (37 aa).

Cys31 and Cys37 are joined by a disulfide.

Expressed by the skin glands.

It localises to the secreted. Its function is as follows. Antimicrobial peptide. This chain is Esculentin-2Rb, found in Pelophylax ridibundus (Marsh frog).